Here is an 88-residue protein sequence, read N- to C-terminus: Large ribosomal subunit protein bL27 (88 aa).

The segment at M1–V23 is disordered.

This sequence belongs to the bacterial ribosomal protein bL27 family.

The sequence is that of Large ribosomal subunit protein bL27 from Methylorubrum extorquens (strain CM4 / NCIMB 13688) (Methylobacterium extorquens).